Here is a 418-residue protein sequence, read N- to C-terminus: Serine hydroxymethyltransferase (418 aa).

Residues L121 and 125–127 (GHL) each bind (6S)-5,6,7,8-tetrahydrofolate. Position 230 is an N6-(pyridoxal phosphate)lysine (K230). (6S)-5,6,7,8-tetrahydrofolate-binding positions include E246 and 355 to 357 (SPF).

It belongs to the SHMT family. As to quaternary structure, homodimer. The cofactor is pyridoxal 5'-phosphate.

It is found in the cytoplasm. The enzyme catalyses (6R)-5,10-methylene-5,6,7,8-tetrahydrofolate + glycine + H2O = (6S)-5,6,7,8-tetrahydrofolate + L-serine. Its pathway is one-carbon metabolism; tetrahydrofolate interconversion. It functions in the pathway amino-acid biosynthesis; glycine biosynthesis; glycine from L-serine: step 1/1. In terms of biological role, catalyzes the reversible interconversion of serine and glycine with tetrahydrofolate (THF) serving as the one-carbon carrier. This reaction serves as the major source of one-carbon groups required for the biosynthesis of purines, thymidylate, methionine, and other important biomolecules. Also exhibits THF-independent aldolase activity toward beta-hydroxyamino acids, producing glycine and aldehydes, via a retro-aldol mechanism. This Streptococcus pneumoniae (strain 70585) protein is Serine hydroxymethyltransferase.